A 90-amino-acid chain; its full sequence is Probable Fe(2+)-trafficking protein (90 aa).

The protein belongs to the Fe(2+)-trafficking protein family.

In terms of biological role, could be a mediator in iron transactions between iron acquisition and iron-requiring processes, such as synthesis and/or repair of Fe-S clusters in biosynthetic enzymes. This Aliivibrio fischeri (strain ATCC 700601 / ES114) (Vibrio fischeri) protein is Probable Fe(2+)-trafficking protein.